We begin with the raw amino-acid sequence, 330 residues long: Aspartate--ammonia ligase (330 aa).

This sequence belongs to the class-II aminoacyl-tRNA synthetase family. AsnA subfamily.

The protein resides in the cytoplasm. The catalysed reaction is L-aspartate + NH4(+) + ATP = L-asparagine + AMP + diphosphate + H(+). The protein operates within amino-acid biosynthesis; L-asparagine biosynthesis; L-asparagine from L-aspartate (ammonia route): step 1/1. This chain is Aspartate--ammonia ligase, found in Escherichia fergusonii (strain ATCC 35469 / DSM 13698 / CCUG 18766 / IAM 14443 / JCM 21226 / LMG 7866 / NBRC 102419 / NCTC 12128 / CDC 0568-73).